Consider the following 105-residue polypeptide: Ribonuclease P protein component 4 (105 aa).

Zn(2+)-binding residues include cysteine 63, cysteine 66, cysteine 89, and cysteine 92.

The protein belongs to the eukaryotic/archaeal RNase P protein component 4 family. Consists of a catalytic RNA component and at least 4-5 protein subunits. Zn(2+) is required as a cofactor.

It is found in the cytoplasm. The enzyme catalyses Endonucleolytic cleavage of RNA, removing 5'-extranucleotides from tRNA precursor.. Its function is as follows. Part of ribonuclease P, a protein complex that generates mature tRNA molecules by cleaving their 5'-ends. This Methanoculleus marisnigri (strain ATCC 35101 / DSM 1498 / JR1) protein is Ribonuclease P protein component 4.